The sequence spans 313 residues: MSKMMVFTGNANPDLARRVVRQLHIPLGDVSVGKFSDGEISVEINENVRGKDVFLIQPTCAPTNDNLMELVVMADAFRRSSATRITAVIPYFGYARQDRRPRSARVAISAKVVADMLTVVGVNRVLTVDLHADQIQGFFDIPVDNIYGSPVLVDDIEDQRFENLMIVSPDIGGVVRARAVAKSLGVDLAIIDKRRPKANQSEVMHIIGDVEGRTCVLVDDMVDTAGTLGHAAKALKEHGAAKVIAYCTHPVLSGRAIENIEKSVLDELVVTNTIPLSAAAQACGRIRQLDIAPVVAEAMRRISNEESISAMFR.

ATP is bound by residues 37–39 and 96–97; these read DGE and RQ. His131 and Asp170 together coordinate Mg(2+). Lys193 is a catalytic residue. D-ribose 5-phosphate-binding positions include Arg195, Asp219, and 223-227; that span reads DTAGT.

It belongs to the ribose-phosphate pyrophosphokinase family. Class I subfamily. Homohexamer. The cofactor is Mg(2+).

Its subcellular location is the cytoplasm. The enzyme catalyses D-ribose 5-phosphate + ATP = 5-phospho-alpha-D-ribose 1-diphosphate + AMP + H(+). It functions in the pathway metabolic intermediate biosynthesis; 5-phospho-alpha-D-ribose 1-diphosphate biosynthesis; 5-phospho-alpha-D-ribose 1-diphosphate from D-ribose 5-phosphate (route I): step 1/1. Involved in the biosynthesis of the central metabolite phospho-alpha-D-ribosyl-1-pyrophosphate (PRPP) via the transfer of pyrophosphoryl group from ATP to 1-hydroxyl of ribose-5-phosphate (Rib-5-P). This chain is Ribose-phosphate pyrophosphokinase, found in Pseudomonas aeruginosa (strain ATCC 15692 / DSM 22644 / CIP 104116 / JCM 14847 / LMG 12228 / 1C / PRS 101 / PAO1).